A 490-amino-acid chain; its full sequence is Glycine--tRNA ligase (490 aa).

Substrate-binding residues include R99 and E163. Residues 195 to 197 (RNE), 205 to 210 (FRTREF), 282 to 283 (EL), and 326 to 329 (GLTR) each bind ATP. 210-214 (FEQME) contacts substrate. 322-326 (EPAAG) contributes to the substrate binding site. Residues 470–490 (PVEMGGEPWPESGVQEAGGLY) are disordered.

This sequence belongs to the class-II aminoacyl-tRNA synthetase family. In terms of assembly, homodimer.

It is found in the cytoplasm. The enzyme catalyses tRNA(Gly) + glycine + ATP = glycyl-tRNA(Gly) + AMP + diphosphate. In terms of biological role, catalyzes the attachment of glycine to tRNA(Gly). The polypeptide is Glycine--tRNA ligase (Bifidobacterium longum (strain NCC 2705)).